We begin with the raw amino-acid sequence, 847 residues long: Alanine--tRNA ligase (847 aa).

The Zn(2+) site is built by histidine 554, histidine 558, cysteine 656, and histidine 660.

The protein belongs to the class-II aminoacyl-tRNA synthetase family. It depends on Zn(2+) as a cofactor.

The protein localises to the cytoplasm. It carries out the reaction tRNA(Ala) + L-alanine + ATP = L-alanyl-tRNA(Ala) + AMP + diphosphate. Its function is as follows. Catalyzes the attachment of alanine to tRNA(Ala) in a two-step reaction: alanine is first activated by ATP to form Ala-AMP and then transferred to the acceptor end of tRNA(Ala). Also edits incorrectly charged Ser-tRNA(Ala) and Gly-tRNA(Ala) via its editing domain. This Helicobacter pylori (strain ATCC 700392 / 26695) (Campylobacter pylori) protein is Alanine--tRNA ligase.